Consider the following 644-residue polypeptide: MRPSGDEDRARRRRRRRRRRDLLLSQLCFLASVALLLWSLSSLREQKELDLMDLVGEDRKWMMARKLMQVNDTLTSEDAGLRNSKNCTEPALHEFPNDIFTNEDRRQGAVVLHVLCAIYMFYALAIVCDDFFVPSLEKICERLHLSEDVAGATFMAAGSSAPELFTSVIGVFITKGDVGVGTIVGSAVFNILCIIGVCGLFAGQVVALSSWCLLRDSIYYTLSVIALIVFIYDEKVSWWESLVLVLMYLIYIVIMKYNACIHQCFERRTKGAGNMVNGLANNAEIDDSSNCDATVVLLKKANFHRKASVIMVDELLSAYPHQLSFSEAGLRIMITSHFPPKTRLSMASRMLINERQRLINSRAYTNGESEVAIKIPIKHTVENGTGPSSAPDRGVNGTRRDDVVAEAGNETENENEDNENDEEEEEDEDDDEGPYTPFDTPSGKLETVKWAFTWPLSFVLYFTVPNCNKPRWEKWFMVTFASSTLWIAAFSYMMVWMVTIIGYTLGIPDVIMGITFLAAGTSVPDCMASLIVARQGMGDMAVSNSIGSNVFDILIGLGLPWALQTLAVDYGSYIRLNSRGLIYSVGLLLASVFVTVFGVHLNKWQLDKKLGCGCLLLYGVFLCFSIMTEFNVFTFVNLPMCGDH.

An N-terminal signal peptide occupies residues 1–44; sequence MRPSGDEDRARRRRRRRRRRDLLLSQLCFLASVALLLWSLSSLR. At 45-107 the chain is on the extracellular side; it reads EQKELDLMDL…DIFTNEDRRQ (63 aa). Asn-71 and Asn-86 each carry an N-linked (GlcNAc...) asparagine glycan. The chain crosses the membrane as a helical span at residues 108 to 128; that stretch reads GAVVLHVLCAIYMFYALAIVC. At 129–153 the chain is on the cytoplasmic side; it reads DDFFVPSLEKICERLHLSEDVAGAT. The Alpha-1 repeat unit spans residues 149-189; that stretch reads VAGATFMAAGSSAPELFTSVIGVFITKGDVGVGTIVGSAVF. The chain crosses the membrane as a helical span at residues 154-174; sequence FMAAGSSAPELFTSVIGVFIT. Residues 175-182 are Extracellular-facing; sequence KGDVGVGT. Residues 183-203 form a helical membrane-spanning segment; the sequence is IVGSAVFNILCIIGVCGLFAG. The Cytoplasmic segment spans residues 204-210; that stretch reads QVVALSS. Residues 211–231 traverse the membrane as a helical segment; sequence WCLLRDSIYYTLSVIALIVFI. Topologically, residues 232 to 234 are extracellular; the sequence is YDE. Residues 235 to 255 traverse the membrane as a helical segment; the sequence is KVSWWESLVLVLMYLIYIVIM. The Cytoplasmic portion of the chain corresponds to 256 to 484; that stretch reads KYNACIHQCF…WFMVTFASST (229 aa). Ser-308 bears the Phosphoserine mark. Residues 405–442 form a disordered region; that stretch reads AEAGNETENENEDNENDEEEEEDEDDDEGPYTPFDTPS. Over residues 409 to 433 the composition is skewed to acidic residues; that stretch reads NETENENEDNENDEEEEEDEDDDEG. Residues 485-505 form a helical membrane-spanning segment; it reads LWIAAFSYMMVWMVTIIGYTL. Topologically, residues 506-510 are extracellular; sequence GIPDV. Residues 511–531 form a helical membrane-spanning segment; that stretch reads IMGITFLAAGTSVPDCMASLI. Residues 518-549 form an Alpha-2 repeat; that stretch reads AAGTSVPDCMASLIVARQGMGDMAVSNSIGSN. The Cytoplasmic segment spans residues 532–549; the sequence is VARQGMGDMAVSNSIGSN. The helical transmembrane segment at 550–570 threads the bilayer; the sequence is VFDILIGLGLPWALQTLAVDY. The Extracellular portion of the chain corresponds to 571 to 580; sequence GSYIRLNSRG. The chain crosses the membrane as a helical span at residues 581–601; it reads LIYSVGLLLASVFVTVFGVHL. Residues 602 to 615 are Cytoplasmic-facing; that stretch reads NKWQLDKKLGCGCL. The helical transmembrane segment at 616–636 threads the bilayer; the sequence is LLYGVFLCFSIMTEFNVFTFV. Topologically, residues 637–644 are extracellular; the sequence is NLPMCGDH.

This sequence belongs to the Ca(2+):cation antiporter (CaCA) (TC 2.A.19) family. SLC24A subfamily. As to expression, abundant in the brain. Expressed at low levels in the aorta, uterus and intestine.

The protein localises to the cell membrane. The enzyme catalyses Ca(2+)(out) + K(+)(out) + 4 Na(+)(in) = Ca(2+)(in) + K(+)(in) + 4 Na(+)(out). In terms of biological role, calcium, potassium:sodium antiporter that transports 1 Ca(2+) and 1 K(+) in exchange for 4 Na(+). This is Sodium/potassium/calcium exchanger 3 (SLC24A3) from Homo sapiens (Human).